A 1508-amino-acid chain; its full sequence is DNA-directed RNA polymerase subunit beta' (1508 aa).

Residues Cys71, Cys73, Cys86, and Cys89 each contribute to the Zn(2+) site. 3 residues coordinate Mg(2+): Asp470, Asp472, and Asp474. 4 residues coordinate Zn(2+): Cys804, Cys878, Cys885, and Cys888.

This sequence belongs to the RNA polymerase beta' chain family. In terms of assembly, the RNAP catalytic core consists of 2 alpha, 1 beta, 1 beta' and 1 omega subunit. When a sigma factor is associated with the core the holoenzyme is formed, which can initiate transcription. Mg(2+) serves as cofactor. Zn(2+) is required as a cofactor.

It carries out the reaction RNA(n) + a ribonucleoside 5'-triphosphate = RNA(n+1) + diphosphate. In terms of biological role, DNA-dependent RNA polymerase catalyzes the transcription of DNA into RNA using the four ribonucleoside triphosphates as substrates. This is DNA-directed RNA polymerase subunit beta' from Campylobacter fetus subsp. fetus (strain 82-40).